Reading from the N-terminus, the 495-residue chain is Sugar phosphate exchanger 3 (495 aa).

Residues 16-36 (FSHHHMVVFLLTFFSYSLLHA) traverse the membrane as a helical segment. N-linked (GlcNAc...) asparagine glycosylation occurs at Asn-58. A run of 5 helical transmembrane segments spans residues 82–102 (TLFL…GLFI), 114–134 (WVLS…GTLT), 148–168 (LWIV…AVMG), 178–198 (VVFG…ACLA), and 210–230 (FLVT…GLLV). Asn-267 carries N-linked (GlcNAc...) asparagine glycosylation. The next 6 membrane-spanning stretches (helical) occupy residues 298–318 (LAYA…PFYL), 334–354 (IWYD…SDML), 358–378 (APVL…YSRS), 387–407 (LLMA…SSAI), 429–449 (GIVD…VSLI), and 453–473 (LGWM…VLFI).

It belongs to the major facilitator superfamily. Organophosphate:Pi antiporter (OPA) (TC 2.A.1.4) family. As to quaternary structure, interacts with ATRAID; the interaction is direct and both proteins are mutually dependent for their stability. Post-translationally, glycosylated.

The protein localises to the endoplasmic reticulum membrane. It is found in the lysosome membrane. Unlike the other SLC37 members, lacks glucose-6-phosphate antiporter activity. In osteoclasts, forms a transporter complex with ATRAID for nitrogen-containing-bisphophonates (N-BPs) required for releasing N-BP molecules that have trafficked to lysosomes through fluid-phase endocytosis into the cytosol. This chain is Sugar phosphate exchanger 3 (SLC37A3), found in Bos taurus (Bovine).